A 320-amino-acid polypeptide reads, in one-letter code: N-acetylneuraminate lyase (320 aa).

Aceneuramate contacts are provided by Thr-51 and Thr-52. The active-site Proton donor is the Tyr-143. The Schiff-base intermediate with substrate role is filled by Lys-173. 5 residues coordinate aceneuramate: Ser-175, Gly-199, Asp-201, Glu-202, and Ser-218.

The protein belongs to the DapA family. NanA subfamily. In terms of assembly, homotetramer. In terms of tissue distribution, isoform 2 is expressed in placenta, liver, kidney, pancreas, spleen, thymus, ovary, small intestine and peripheral blood leukocyte.

It is found in the cytoplasm. It catalyses the reaction aceneuramate = aldehydo-N-acetyl-D-mannosamine + pyruvate. It participates in amino-sugar metabolism; N-acetylneuraminate degradation. In terms of biological role, catalyzes the cleavage of N-acetylneuraminic acid (sialic acid) to form pyruvate and N-acetylmannosamine via a Schiff base intermediate. It prevents sialic acids from being recycled and returning to the cell surface. Involved in the N-glycolylneuraminic acid (Neu5Gc) degradation pathway. Although human is not able to catalyze formation of Neu5Gc due to the inactive CMAHP enzyme, Neu5Gc is present in food and must be degraded. The chain is N-acetylneuraminate lyase from Homo sapiens (Human).